We begin with the raw amino-acid sequence, 431 residues long: Forkhead box protein P3 (431 aa).

The tract at residues 1–68 is disordered; it reads MPNPRPGKPS…SSLNPMPPSQ (68 aa). Residues 10–25 are compositionally biased toward low complexity; sequence SAPSLALGPSPGASPS. S19 carries the phosphoserine; by CDK2 modification. Position 31 is an N6-acetyllysine (K31). Residues 68 to 76 carry the Nuclear export signal motif; sequence QLQLPTLPL. Residues 92 to 96 carry the LXXLL motif motif; it reads LQALL. Residues 106-190 are essential for transcriptional repressor activity and for interaction with KAT5 and HDAC7; the sequence is LSTVDAHART…STLSAVPQSS (85 aa). The tract at residues 106–198 is interaction with ZFP90; that stretch reads LSTVDAHART…SSYPLLANGV (93 aa). The interaction with IKZF4 stretch occupies residues 149-199; it reads LPPGINVASLEWVSREPALLCTFPNPSAPRKDSTLSAVPQSSYPLLANGVC. Residues 197–222 form a C2H2-type zinc finger; that stretch reads GVCKWPGCEKVFEEPEDFLKHCQADH. The Nuclear export signal signature appears at 239–248; sequence VQSLEQQLVL. The interval 239–260 is leucine-zipper; it reads VQSLEQQLVLEKEKLSAMQAHL. Glycyl lysine isopeptide (Lys-Gly) (interchain with G-Cter in ubiquitin) cross-links involve residues K250 and K252. Residues K263 and K268 each carry the N6-acetyllysine; alternate modification. Glycyl lysine isopeptide (Lys-Gly) (interchain with G-Cter in ubiquitin); alternate cross-links involve residues K263 and K268. The interaction with RUNX1 stretch occupies residues 278–336; that stretch reads GSCCIVAAGSQGPVVPAWSGPREAPDSLFAVRRHLWGSHGNSTFPEFLHNMDYFKFHNM. Positions 337–423 form a DNA-binding region, fork-head; sequence RPPFTYATLI…RKKRSQRPSR (87 aa). A Glycyl lysine isopeptide (Lys-Gly) (interchain with G-Cter in ubiquitin) cross-link involves residue K393. The Nuclear localization signal signature appears at 414-417; the sequence is RKKR. S418 is subject to Phosphoserine. Positions 418-431 are excised as a propeptide; it reads SQRPSRCSNPTPGP.

As to quaternary structure, homodimer. Dimerization is essential for its transcriptional regulator activity. Interacts with IKZF3. Isoform 1 (via LXXLL motif), but not isoform 2, interacts with isoform 4 of RORA (via AF-2 motif). Interacts with STUB1, HSPA8 and HSPA1A/B. Interacts with PPP1CA, PPP1CB and PPP1CG. Interacts with KAT5 and HDAC7. Interacts with HDAC9 in the absence of T-cell stimulation. Interacts with USP7. Interacts with isoform 2 of ZFP90 and can form a complex with TRIM28 in the presence of isoform 2 of ZFP90. Interacts with RUNX1. Interacts with RORC. Interacts with RELA and NFATC2. Interacts with RUNX2, RUNX3 and IKZF4. In terms of processing, polyubiquitinated, leading to its proteasomal degradation in regulatory T-cells (Treg) which is mediated by STUB1 in a HSPA1A/B-dependent manner. Deubiquitinated by USP7 and USP44; leading to increase in protein stability. Post-translationally, phosphorylation at Ser-418 regulates its transcriptional repressor activity and consequently, regulatory T-cells (Treg) suppressive function. Dephosphorylated at Ser-418 by protein phosphatase 1 (PP1) in Treg cells derived from patients with rheumatoid arthritis. Phosphorylation by CDK2 negatively regulates its transcriptional activity and protein stability. Acetylation on lysine residues stabilizes FOXP3 and promotes differentiation of T-cells into induced regulatory T-cells (iTregs) associated with suppressive functions. Acetylation is mediated by a coordinated action of KAT5 and EP300/p300 acetyltransferases: EP300/p300 is required to enhance KAT5 autoacetylation, promoting acetylation of FOXP3 by KAT5. Deacetylated by SIRT1. In terms of processing, undergoes proteolytic cleavage in activated regulatory T-cells (Treg), and can be cleaved at either the N- or C-terminal site, or at both sites.

It localises to the nucleus. The protein resides in the cytoplasm. Functionally, transcriptional regulator which is crucial for the development and inhibitory function of regulatory T-cells (Treg). Plays an essential role in maintaining homeostasis of the immune system by allowing the acquisition of full suppressive function and stability of the Treg lineage, and by directly modulating the expansion and function of conventional T-cells. Can act either as a transcriptional repressor or a transcriptional activator depending on its interactions with other transcription factors, histone acetylases and deacetylases. The suppressive activity of Treg involves the coordinate activation of many genes, including CTLA4 and TNFRSF18 by FOXP3 along with repression of genes encoding cytokines such as interleukin-2 (IL2) and interferon-gamma (IFNG). Inhibits cytokine production and T-cell effector function by repressing the activity of two key transcription factors, RELA and NFATC2. Mediates transcriptional repression of IL2 via its association with histone acetylase KAT5 and histone deacetylase HDAC7. Can activate the expression of TNFRSF18, IL2RA and CTLA4 and repress the expression of IL2 and IFNG via its association with transcription factor RUNX1. Inhibits the differentiation of IL17 producing helper T-cells (Th17) by antagonizing RORC function, leading to down-regulation of IL17 expression, favoring Treg development. Inhibits the transcriptional activator activity of RORA. Can repress the expression of IL2 and IFNG via its association with transcription factor IKZF4. In Homo sapiens (Human), this protein is Forkhead box protein P3 (FOXP3).